The following is a 376-amino-acid chain: Gibberellic acid methyltransferase 1 (376 aa).

S-adenosyl-L-homocysteine is bound by residues Tyr22, Cys64, Asn69, Asp104, Leu105, Ser136, and Phe137. A gibberellin A9-binding site is contributed by Trp158. Mg(2+)-binding residues include Asn175, Val179, Arg265, Asp266, Phe268, and Asn269.

The protein belongs to the methyltransferase superfamily. Type-7 methyltransferase family. SABATH subfamily. The cofactor is Mg(2+). Expressed in siliques, developing seeds, anthers and germinating seeds. Not detected in leaves, stems, flowers and roots.

The enzyme catalyses gibberellin A9 + S-adenosyl-L-methionine = O-methyl gibberellin A9 + S-adenosyl-L-homocysteine. With respect to regulation, up-regulated by K(+) and NH(4+), down-regulated by Zn(2+), Cu(2+), Fe(2+) and Fe(3+). In terms of biological role, methylates the carboxyl group of several gibberellins (GAs). Substrate preference is GA9 &gt; GA20 &gt; GA3 &gt; GA4 &gt; GA34 &gt; GA51 &gt; GA1 &gt; GA19 &gt; GA12. No activity with diterpenes abietic acid and ent-kaurenoic acid. This chain is Gibberellic acid methyltransferase 1 (GAMT1), found in Arabidopsis thaliana (Mouse-ear cress).